A 359-amino-acid chain; its full sequence is Protein-L-isoaspartate O-methyltransferase domain-containing protein 2 (359 aa).

Glycine 2 is lipidated: N-myristoyl glycine. The active site involves serine 64. AdoMet binding motif regions lie at residues 85-94 (LNLGSGTGYL), 160-164 (YDRVY), and 181-191 (LKVGGILVMPL). Positions 240 to 250 (VRSLQDLARLA) are BC-box. Residues 301 to 328 (SNPSDDTSCEDAEEDRREVAERTLQETK) form a disordered region. Basic and acidic residues predominate over residues 314–328 (EDRREVAERTLQETK). Residues 343 to 346 (LPLP) form a CUL-box region.

It belongs to the methyltransferase superfamily. L-isoaspartyl/D-aspartyl protein methyltransferase family.

It is found in the cytoplasm. May act as a substrate recognition component of an ECS (Elongin BC-CUL5-SOCS-box protein) E3 ubiquitin ligase complex which mediates the ubiquitination and subsequent proteasomal degradation of target proteins. May bind to the methyltransferase cofactor S-adenosylmethionine (AdoMet) via the N-terminal AdoMet binding motif, but probably does not display methyltransferase activity. The chain is Protein-L-isoaspartate O-methyltransferase domain-containing protein 2 (Pcmtd2) from Mus musculus (Mouse).